Here is a 299-residue protein sequence, read N- to C-terminus: dTDP-4-dehydrorhamnose reductase (299 aa).

NADH is bound by residues Gly-10 to Val-12, Asp-30, Asp-39 to Phe-40, and Ala-63 to Thr-65. Gln-11–Val-12 is an NADPH binding site. NADPH contacts are provided by residues Asp-39–Phe-40, Ala-63–Thr-65, and Tyr-102. Thr-104–Asp-105 contributes to the dTDP-beta-L-rhamnose binding site. The NADH site is built by Tyr-128 and Lys-132. 2 residues coordinate NADPH: Tyr-128 and Lys-132. Residue Tyr-128 is the Proton donor/acceptor of the active site. Position 153 (Trp-153) interacts with dTDP-beta-L-rhamnose.

Belongs to the dTDP-4-dehydrorhamnose reductase family. Homodimer. It depends on Mg(2+) as a cofactor.

It carries out the reaction dTDP-beta-L-rhamnose + NADP(+) = dTDP-4-dehydro-beta-L-rhamnose + NADPH + H(+). It participates in carbohydrate biosynthesis; dTDP-L-rhamnose biosynthesis. Its pathway is bacterial outer membrane biogenesis; LPS O-antigen biosynthesis. Its function is as follows. Involved in the biosynthesis of the dTDP-L-rhamnose which is an important component of lipopolysaccharide (LPS). Catalyzes the reduction of dTDP-6-deoxy-L-lyxo-4-hexulose to yield dTDP-L-rhamnose. RmlD uses NADH and NADPH nearly equally well. The polypeptide is dTDP-4-dehydrorhamnose reductase (Escherichia coli (strain K12)).